A 314-amino-acid chain; its full sequence is Olfactory receptor 1Q1 (314 aa).

At 1–25 (MDNSNWTSVSHFVLLGISTHPEEQI) the chain is on the extracellular side. Residue asparagine 5 is glycosylated (N-linked (GlcNAc...) asparagine). Residues 26–49 (PLFLVFSLMYAINISGNLAIITLI) form a helical membrane-spanning segment. The Cytoplasmic portion of the chain corresponds to 50-57 (LSAPRLHI). The helical transmembrane segment at 58 to 79 (PMYIFLSNLALTDICFTSTTVP) threads the bilayer. Residues 80–100 (KMLQIIFSPTKVISYTGCLAQ) are Extracellular-facing. A disulfide bond links cysteine 97 and cysteine 189. The chain crosses the membrane as a helical span at residues 101–120 (TYFFICFAVMENFILAVMAY). Residues 121-139 (DRYIAICHPFHYTMILTRM) lie on the Cytoplasmic side of the membrane. A helical membrane pass occupies residues 140–158 (LCVKMVVMCHALSHLHAML). Topologically, residues 159–195 (HTFLIGQLIFCADNRIPHFFCDLYALMKISCTSTYLN) are extracellular. A helical membrane pass occupies residues 196 to 219 (TLMIHTEGAVVISGALAFITASYA). The Cytoplasmic segment spans residues 220–236 (CIILVVLRIPSAKGRWK). Residues 237–259 (TFSTCGSHLTVVAIFYGTLSWVY) traverse the membrane as a helical segment. Topologically, residues 260-272 (FRPLSSYSVTKGR) are extracellular. A helical transmembrane segment spans residues 273 to 292 (IITVVYTVVTPMLNPFIYSL). Residues 293–314 (RNGDVKGGFMKWMSRMQTFFFR) are Cytoplasmic-facing.

Belongs to the G-protein coupled receptor 1 family.

The protein resides in the cell membrane. Functionally, odorant receptor. The protein is Olfactory receptor 1Q1 (OR1Q1) of Homo sapiens (Human).